The primary structure comprises 272 residues: Putative phosphatase BU028/BU029 (272 aa).

Catalysis depends on Asp-8, which acts as the Nucleophile. A Mg(2+)-binding site is contributed by Asp-8. Residue Leu-9 participates in phosphate binding. Asp-10 contacts Mg(2+). Phosphate-binding positions include 42-43 (SG) and Lys-191. Asp-214 is a binding site for Mg(2+). Asn-217 provides a ligand contact to phosphate.

Belongs to the HAD-like hydrolase superfamily. Cof family. It depends on Mg(2+) as a cofactor.

This Buchnera aphidicola subsp. Acyrthosiphon pisum (strain APS) (Acyrthosiphon pisum symbiotic bacterium) protein is Putative phosphatase BU028/BU029.